A 707-amino-acid polypeptide reads, in one-letter code: Protein kinase C-like 1B (707 aa).

One can recognise a C2 domain in the interval 1 to 114 (MLFTGTVRVR…KIGSANDIWV (114 aa)). Phorbol-ester/DAG-type zinc fingers lie at residues 170–220 (GHKF…VWKC) and 248–298 (PHRF…ANNC). Positions 323–368 (SKKKPSIMTDTSTDISGSSNSENSGYLQQISEDDSGTTSSRSASKV) are disordered. A compositionally biased stretch (polar residues) spans 330–365 (MTDTSTDISGSSNSENSGYLQQISEDDSGTTSSRSA). The region spanning 378–638 (FTFMKVLGKG…EDAIRAHPFF (261 aa)) is the Protein kinase domain. ATP-binding positions include 384 to 392 (LGKGSFGKV) and Lys-407. Catalysis depends on Asp-502, which acts as the Proton acceptor. In terms of domain architecture, AGC-kinase C-terminal spans 639–707 (REIDWDALES…FSFINPHFTY (69 aa)).

This sequence belongs to the protein kinase superfamily. AGC Ser/Thr protein kinase family. PKC subfamily. In terms of tissue distribution, expressed selectively in neurons that receive, transmit and process environmental signals.

The protein localises to the membrane. It is found in the cytoplasm. It localises to the cytoskeleton. The catalysed reaction is L-seryl-[protein] + ATP = O-phospho-L-seryl-[protein] + ADP + H(+). The enzyme catalyses L-threonyl-[protein] + ATP = O-phospho-L-threonyl-[protein] + ADP + H(+). Its function is as follows. PKC is activated by diacylglycerol which in turn phosphorylates a range of cellular proteins. PKC also serves as the receptor for phorbol esters, a class of tumor promoters. Involved in neuropeptide secretion in motor axons. Likely to act via the extracellular signal-regulated kinase/mitogen-activated protein kinase (ERK/MAPK) pathway in the signaling response to various sensory neurons; temperature, odor, taste, and osmolality. Its role in regulation differs depending on the neuron in which it is acting; thermosensation in AFD neurons, osmolality in ASH neurons, olfactory perception in AWA and AWC neurons. Promotes dauer formation mediated by the insulin/IGF pathway. Required for resistance to antimitotic toxins. This Caenorhabditis elegans protein is Protein kinase C-like 1B.